The primary structure comprises 841 residues: Probable outer membrane usher protein EcpC (841 aa).

The first 29 residues, 1–29 (MPLRRFSPGLKAQFAFGMVFLFVQPDASA), serve as a signal peptide directing secretion.

Belongs to the EcpC/MatD family.

Functionally, part of the ecpRABCDE operon, which encodes the E.coli common pilus (ECP). ECP is found in both commensal and pathogenic strains and plays a dual role in early-stage biofilm development and host cell recognition. The chain is Probable outer membrane usher protein EcpC (ecpC) from Escherichia coli O18:K1:H7 (strain IHE3034 / ExPEC).